The chain runs to 349 residues: MNKVVVGLSGGVDSSVAAAVLHHQGYEVIGLTLWLMKGKGQCCSEGMVDAAFICEQLGIPHHIVDSRDVFQANIVNYLVSGYEAGITPLPCSQCNRAVKFGPMLNYARQELGCDRIATGHYARIRYDEISQRYQLLRAIDRNKDQSYFLYDLSQEMLAGTVFPLGDQTKEDTRRIAAEFDLKTASKPESQDLCLIEAHGSMKTFLDQYIHQKEGDIVDLEGKVLGKHQGIHHYTIGQRKGLGVAAPEPLYVVKLDPIMNQVIVANRANAGRSDCTVTRLNWVSIAAPSTPIRVETQIRYRSSAVPVDLIPLEDNRVKLVFDEPEFGITPGQAAVFYDGEILLGGGIIEL.

ATP-binding positions include 7 to 14 (GLSGGVDS) and L33. The Nucleophile role is filled by C94. C94 and C193 are oxidised to a cystine. G119 serves as a coordination point for ATP. An interaction with tRNA region spans residues 143–145 (KDQ). C193 acts as the Cysteine persulfide intermediate in catalysis. The segment at 298–299 (RY) is interaction with tRNA.

The protein belongs to the MnmA/TRMU family.

Its subcellular location is the cytoplasm. It carries out the reaction S-sulfanyl-L-cysteinyl-[protein] + uridine(34) in tRNA + AH2 + ATP = 2-thiouridine(34) in tRNA + L-cysteinyl-[protein] + A + AMP + diphosphate + H(+). Catalyzes the 2-thiolation of uridine at the wobble position (U34) of tRNA, leading to the formation of s(2)U34. In Rippkaea orientalis (strain PCC 8801 / RF-1) (Cyanothece sp. (strain PCC 8801)), this protein is tRNA-specific 2-thiouridylase MnmA.